Here is a 753-residue protein sequence, read N- to C-terminus: Ion-translocating oxidoreductase complex subunit C (753 aa).

4Fe-4S ferredoxin-type domains are found at residues 367–397 (EMGEPQEEKGCIRCSACADACPADLLPQQLY) and 407–436 (KATAHNLADCIECGACAWVCPSNIPLVQYF). [4Fe-4S] cluster contacts are provided by Cys377, Cys380, Cys383, Cys387, Cys416, Cys419, Cys422, and Cys426. 4 disordered regions span residues 517–561 (AKPD…RKAA), 606–625 (RKAEQQVAPVEAPVAEPVDP), 640–659 (RKAEQQVAPVEAPVAEPVDP), and 705–735 (AKARKAEQQAAQPDLASAAANDDPRKAAVAA). Residues 526 to 537 (AAREARKAEARA) are compositionally biased toward basic and acidic residues. Composition is skewed to low complexity over residues 610–622 (QQVAPVEAPVAEP), 644–656 (QQVAPVEAPVAEP), and 712–735 (QQAAQPDLASAAANDDPRKAAVAA).

It belongs to the 4Fe4S bacterial-type ferredoxin family. RnfC subfamily. In terms of assembly, the complex is composed of six subunits: RnfA, RnfB, RnfC, RnfD, RnfE and RnfG. [4Fe-4S] cluster serves as cofactor.

It is found in the cell inner membrane. Part of a membrane-bound complex that couples electron transfer with translocation of ions across the membrane. The sequence is that of Ion-translocating oxidoreductase complex subunit C from Klebsiella pneumoniae (strain 342).